Consider the following 349-residue polypeptide: tRNA pseudouridine synthase D (349 aa).

Residue phenylalanine 27 coordinates substrate. Aspartate 80 acts as the Nucleophile in catalysis. Asparagine 129 serves as a coordination point for substrate. The 149-residue stretch at 155–303 folds into the TRUD domain; the sequence is GVPNYFGAQR…VEAARRAMLL (149 aa). Phenylalanine 329 is a binding site for substrate.

Belongs to the pseudouridine synthase TruD family.

It carries out the reaction uridine(13) in tRNA = pseudouridine(13) in tRNA. Functionally, responsible for synthesis of pseudouridine from uracil-13 in transfer RNAs. The polypeptide is tRNA pseudouridine synthase D (Escherichia coli O45:K1 (strain S88 / ExPEC)).